The sequence spans 122 residues: Large ribosomal subunit protein bL12 (122 aa).

This sequence belongs to the bacterial ribosomal protein bL12 family. Homodimer. Part of the ribosomal stalk of the 50S ribosomal subunit. Forms a multimeric L10(L12)X complex, where L10 forms an elongated spine to which 2 to 4 L12 dimers bind in a sequential fashion. Binds GTP-bound translation factors.

In terms of biological role, forms part of the ribosomal stalk which helps the ribosome interact with GTP-bound translation factors. Is thus essential for accurate translation. This Clostridium botulinum (strain 657 / Type Ba4) protein is Large ribosomal subunit protein bL12.